We begin with the raw amino-acid sequence, 446 residues long: Glutamyl-tRNA reductase (446 aa).

Residues 49–52 (TCNR), S108, 113–115 (ETQ), and Q119 each bind substrate. The active-site Nucleophile is the C50. Position 188 to 193 (188 to 193 (GAGKMS)) interacts with NADP(+).

The protein belongs to the glutamyl-tRNA reductase family. As to quaternary structure, homodimer.

It carries out the reaction (S)-4-amino-5-oxopentanoate + tRNA(Glu) + NADP(+) = L-glutamyl-tRNA(Glu) + NADPH + H(+). The protein operates within porphyrin-containing compound metabolism; protoporphyrin-IX biosynthesis; 5-aminolevulinate from L-glutamyl-tRNA(Glu): step 1/2. Catalyzes the NADPH-dependent reduction of glutamyl-tRNA(Glu) to glutamate 1-semialdehyde (GSA). The sequence is that of Glutamyl-tRNA reductase from Desulforudis audaxviator (strain MP104C).